The primary structure comprises 387 residues: Patatin-08 (387 aa).

An N-terminal signal peptide occupies residues 1–23 (MATTKSFLILIVMILATTSSTFA). The 199-residue stretch at 32–230 (LSIDGGGIKG…TVADPALLSI (199 aa)) folds into the PNPLA domain. The GXGXXG motif lies at 36-41 (GGGIKG). The short motif at 75-79 (GTSTG) is the GXSXG element. The Nucleophile role is filled by Ser-77. A glycan (N-linked (GlcNAc...) asparagine) is linked at Asn-115. Asp-216 functions as the Proton acceptor in the catalytic mechanism. Residues 216-218 (DGA) carry the DGA/G motif. A coiled-coil region spans residues 361 to 385 (ETYEEALKRFAKLLSDRKKLRANKA).

This sequence belongs to the patatin family. In terms of tissue distribution, tuber.

Its subcellular location is the vacuole. Functionally, probable lipolytic acyl hydrolase (LAH), an activity which is thought to be involved in the response of tubers to pathogens. The polypeptide is Patatin-08 (Solanum tuberosum (Potato)).